Consider the following 103-residue polypeptide: uncharacterized protein (103 aa).

2 stretches are compositionally biased toward polar residues: residues Met-1–Tyr-10 and Thr-18–Tyr-28. The segment at Met-1–Tyr-28 is disordered.

This is an uncharacterized protein from Acanthamoeba polyphaga mimivirus (APMV).